Consider the following 321-residue polypeptide: Lipoyl synthase (321 aa).

[4Fe-4S] cluster-binding residues include C68, C73, C79, C94, C98, C101, and S308. A Radical SAM core domain is found at 80-297 (FNHGTATFMI…KEQALAMGFT (218 aa)).

The protein belongs to the radical SAM superfamily. Lipoyl synthase family. The cofactor is [4Fe-4S] cluster.

It is found in the cytoplasm. It catalyses the reaction [[Fe-S] cluster scaffold protein carrying a second [4Fe-4S](2+) cluster] + N(6)-octanoyl-L-lysyl-[protein] + 2 oxidized [2Fe-2S]-[ferredoxin] + 2 S-adenosyl-L-methionine + 4 H(+) = [[Fe-S] cluster scaffold protein] + N(6)-[(R)-dihydrolipoyl]-L-lysyl-[protein] + 4 Fe(3+) + 2 hydrogen sulfide + 2 5'-deoxyadenosine + 2 L-methionine + 2 reduced [2Fe-2S]-[ferredoxin]. It functions in the pathway protein modification; protein lipoylation via endogenous pathway; protein N(6)-(lipoyl)lysine from octanoyl-[acyl-carrier-protein]: step 2/2. In terms of biological role, catalyzes the radical-mediated insertion of two sulfur atoms into the C-6 and C-8 positions of the octanoyl moiety bound to the lipoyl domains of lipoate-dependent enzymes, thereby converting the octanoylated domains into lipoylated derivatives. This Proteus mirabilis (strain HI4320) protein is Lipoyl synthase.